A 482-amino-acid polypeptide reads, in one-letter code: Catalase (482 aa).

The span at 1-11 (MNAMTNKTLTT) shows a compositional bias: polar residues. The segment at 1 to 21 (MNAMTNKTLTTAAGAPVADNN) is disordered. Catalysis depends on residues His-57 and Asn-130. Tyr-340 contacts heme.

Belongs to the catalase family. Homodimer. Requires heme as cofactor.

The catalysed reaction is 2 H2O2 = O2 + 2 H2O. Decomposes hydrogen peroxide into water and oxygen; serves to protect cells from the toxic effects of hydrogen peroxide. The protein is Catalase (katA) of Bordetella bronchiseptica (strain ATCC BAA-588 / NCTC 13252 / RB50) (Alcaligenes bronchisepticus).